We begin with the raw amino-acid sequence, 297 residues long: Polyhedral envelope protein (297 aa).

It belongs to the baculoviridae PE family.

It localises to the virion membrane. Major component of the polyhedra envelope. The sequence is that of Polyhedral envelope protein from Orgyia pseudotsugata (Douglas-fir tussock moth).